Reading from the N-terminus, the 714-residue chain is Fatty acid oxidation complex subunit alpha (714 aa).

Positions 1–190 (MEMASAFTLN…KLGLVDDVVP (190 aa)) are enoyl-CoA hydratase. The 3-hydroxyacyl-CoA dehydrogenase stretch occupies residues 306–714 (APLNSVGILG…FWKTTATDLQ (409 aa)).

This sequence in the N-terminal section; belongs to the enoyl-CoA hydratase/isomerase family. The protein in the central section; belongs to the 3-hydroxyacyl-CoA dehydrogenase family. As to quaternary structure, heterotetramer of two alpha chains (FadJ) and two beta chains (FadI).

It is found in the cytoplasm. It catalyses the reaction a (3S)-3-hydroxyacyl-CoA = a (2E)-enoyl-CoA + H2O. It carries out the reaction a 4-saturated-(3S)-3-hydroxyacyl-CoA = a (3E)-enoyl-CoA + H2O. The enzyme catalyses a (3S)-3-hydroxyacyl-CoA + NAD(+) = a 3-oxoacyl-CoA + NADH + H(+). The catalysed reaction is (3S)-3-hydroxybutanoyl-CoA = (3R)-3-hydroxybutanoyl-CoA. It functions in the pathway lipid metabolism; fatty acid beta-oxidation. Its function is as follows. Catalyzes the formation of a hydroxyacyl-CoA by addition of water on enoyl-CoA. Also exhibits 3-hydroxyacyl-CoA epimerase and 3-hydroxyacyl-CoA dehydrogenase activities. The protein is Fatty acid oxidation complex subunit alpha of Escherichia coli (strain SMS-3-5 / SECEC).